Consider the following 137-residue polypeptide: Small ribosomal subunit protein uS12 (137 aa).

A 3-methylthioaspartic acid modification is found at aspartate 102.

It belongs to the universal ribosomal protein uS12 family. In terms of assembly, part of the 30S ribosomal subunit. Contacts proteins S8 and S17. May interact with IF1 in the 30S initiation complex.

Functionally, with S4 and S5 plays an important role in translational accuracy. In terms of biological role, interacts with and stabilizes bases of the 16S rRNA that are involved in tRNA selection in the A site and with the mRNA backbone. Located at the interface of the 30S and 50S subunits, it traverses the body of the 30S subunit contacting proteins on the other side and probably holding the rRNA structure together. The combined cluster of proteins S8, S12 and S17 appears to hold together the shoulder and platform of the 30S subunit. The polypeptide is Small ribosomal subunit protein uS12 (Phytoplasma mali (strain AT)).